Consider the following 244-residue polypeptide: MPRPSPCADSGGGMMTTLTARPEAITFDPQQSALIVVDMQNAYATPGGYLDLAGFDVSTTRPVIANIQTAVTAARAAGMLIIWFQNGWDEQYVEAGGPGSPNFHKSNALKTMRKQPQLQGKLLAKGSWDYQLVDELVPQPGDIVLPKPRYSGFFNTPLDSILRSRGIRHLVFTGIATNVCVESTLRDGFFLEYFGVVLEDATHQAGPEFAQKAALFNIETFFGWVSDVETFCDALSPTSFARIA.

Aspartate 38 acts as the Proton acceptor in catalysis. Lysine 147 is an active-site residue. Cysteine 180 functions as the Nucleophile in the catalytic mechanism.

The protein belongs to the isochorismatase family. RutB subfamily.

It carries out the reaction (Z)-3-ureidoacrylate + H2O + H(+) = (Z)-3-aminoacrylate + NH4(+) + CO2. The catalysed reaction is (Z)-3-ureidoacrylate + H2O = (Z)-3-aminoacrylate + carbamate + H(+). The enzyme catalyses (Z)-2-methylureidoacrylate + H2O + H(+) = (Z)-2-methylaminoacrylate + NH4(+) + CO2. In terms of biological role, hydrolyzes ureidoacrylate to form aminoacrylate and carbamate. The carbamate hydrolyzes spontaneously, thereby releasing one of the nitrogen atoms of the pyrimidine ring as ammonia and one of its carbon atoms as CO2. In Shigella sonnei (strain Ss046), this protein is Ureidoacrylate amidohydrolase RutB.